The primary structure comprises 304 residues: DnaJ homolog subfamily C member 17 (304 aa).

The region spanning 11–76 is the J domain; the sequence is DLYALLGIEE…AARAAYDKVR (66 aa). The segment covering 79-106 has biased composition (basic and acidic residues); that stretch reads KKQAAERTQKLDEKRKKVKLDLEARERQ. Residues 79 to 145 are disordered; it reads KKQAAERTQK…SRQLEEQQRL (67 aa). A Phosphoserine modification is found at Ser-112. Basic and acidic residues predominate over residues 118 to 145; sequence SRSTRTLEQEIERLREEGSRQLEEQQRL. The 72-residue stretch at 178-249 folds into the RRM domain; it reads KCKKEDESKG…NPLKISWLEG (72 aa). Position 264 is an N6-methyllysine (Lys-264).

The protein localises to the cytoplasm. Its subcellular location is the nucleus. Its function is as follows. May negatively affect PAX8-induced thyroglobulin/TG transcription. This is DnaJ homolog subfamily C member 17 (DNAJC17) from Homo sapiens (Human).